Consider the following 757-residue polypeptide: Amine oxidase [copper-containing] 2 (757 aa).

Residues 1 to 4 (MNLK) are Cytoplasmic-facing. A helical membrane pass occupies residues 5-25 (VLLLLLGLSFLTVFALVYVLL). Over 26 to 757 (TRQGSFSQSP…NLPSFSYEGL (732 aa)) the chain is Extracellular. 3 N-linked (GlcNAc...) asparagine glycosylation sites follow: Asn133, Asn198, and Asn226. Asp381 acts as the Proton acceptor in catalysis. Cys399 and Cys425 are joined by a disulfide. The active-site Schiff-base intermediate with substrate; via topaquinone is the Tyr466. 2',4',5'-topaquinone is present on Tyr466. 2 residues coordinate Cu(2+): His517 and His519. Asp526, Leu527, Asp528, Glu569, Glu638, Phe660, and Asn662 together coordinate Ca(2+). Asn663 carries N-linked (GlcNAc...) asparagine glycosylation. Positions 664, 670, and 671 each coordinate Ca(2+). His681 is a binding site for Cu(2+). A disulfide bridge connects residues Cys731 and Cys738.

It belongs to the copper/topaquinone oxidase family. Homodimer; disulfide-linked. Probably forms heterodimers with AOC3. Cu(2+) is required as a cofactor. Requires Ca(2+) as cofactor. It depends on L-topaquinone as a cofactor. In terms of processing, topaquinone (TPQ) is generated by copper-dependent autoxidation of a specific tyrosyl residue. Significantly much highly expressed in retina.

It is found in the cell membrane. The enzyme catalyses 2-phenylethylamine + O2 + H2O = 2-phenylacetaldehyde + H2O2 + NH4(+). The catalysed reaction is tryptamine + O2 + H2O = indole-3-acetaldehyde + H2O2 + NH4(+). It catalyses the reaction tyramine + O2 + H2O = (4-hydroxyphenyl)acetaldehyde + H2O2 + NH4(+). Catalyzes the oxidative deamination of primary amines to the corresponding aldehydes with the concomitant production of hydrogen peroxide and ammonia. Has a preference for 2-phenylethylamine, tryptamine and tyramine. Could also act on methylamine and benzylamine but much less efficiently. The sequence is that of Amine oxidase [copper-containing] 2 from Mus musculus (Mouse).